A 538-amino-acid polypeptide reads, in one-letter code: Atos homolog protein B (538 aa).

Positions 1-18 (MRHVQAEPSPSSEPEAGP) are enriched in low complexity. Disordered stretches follow at residues 1–114 (MRHV…LGVA) and 133–300 (TSSW…VLDP). Positions 227–238 (HTPPGPGPPGPC) are enriched in pro residues. Phosphoserine occurs at positions 254 and 255. The required for macropage invasion stretch occupies residues 348-430 (LLGNFEESLL…VPKVGTVQVT (83 aa)). The tract at residues 436–444 (QTVVKMFLV) is transactivation domain 1 (TAD1).

It belongs to the ATOS family.

It is found in the nucleus. Its function is as follows. Transcription regulator that may syncronize transcriptional and translational programs. The polypeptide is Atos homolog protein B (Homo sapiens (Human)).